The primary structure comprises 207 residues: Large ribosomal subunit protein uL4 (207 aa).

Residues 49 to 78 form a disordered region; it reads HAVKNRSAVSGGGRKPWRQKGTGRARQGSI.

This sequence belongs to the universal ribosomal protein uL4 family. As to quaternary structure, part of the 50S ribosomal subunit.

In terms of biological role, one of the primary rRNA binding proteins, this protein initially binds near the 5'-end of the 23S rRNA. It is important during the early stages of 50S assembly. It makes multiple contacts with different domains of the 23S rRNA in the assembled 50S subunit and ribosome. Functionally, forms part of the polypeptide exit tunnel. In Streptococcus pyogenes serotype M49 (strain NZ131), this protein is Large ribosomal subunit protein uL4.